We begin with the raw amino-acid sequence, 138 residues long: Large ribosomal subunit protein uL16 (138 aa).

A compositionally biased stretch (basic residues) spans 1 to 16 (MLIPRRVKHRKQHHPG). A disordered region spans residues 1–25 (MLIPRRVKHRKQHHPGRSGAATGGT).

The protein belongs to the universal ribosomal protein uL16 family. Part of the 50S ribosomal subunit.

Its function is as follows. Binds 23S rRNA and is also seen to make contacts with the A and possibly P site tRNAs. In Pseudarthrobacter chlorophenolicus (strain ATCC 700700 / DSM 12829 / CIP 107037 / JCM 12360 / KCTC 9906 / NCIMB 13794 / A6) (Arthrobacter chlorophenolicus), this protein is Large ribosomal subunit protein uL16.